We begin with the raw amino-acid sequence, 347 residues long: Protein PET130 (347 aa).

The protein resides in the mitochondrion matrix. The protein is Protein PET130 (PET130) of Saccharomyces cerevisiae (strain ATCC 204508 / S288c) (Baker's yeast).